The chain runs to 378 residues: D-alanine--D-alanine ligase (378 aa).

Residues 141–347 (KKLLTLNGIR…YSELIDQLIQ (207 aa)) form the ATP-grasp domain. Position 171-226 (171-226 (AEELGETLFVKPARQGSSVGIHKVRNEEEYNAALEDGFKYDYKILVEEAIKNPREV)) interacts with ATP. Mg(2+) is bound by residues D301, E314, and N316.

This sequence belongs to the D-alanine--D-alanine ligase family. The cofactor is Mg(2+). Mn(2+) serves as cofactor.

The protein localises to the cytoplasm. The catalysed reaction is 2 D-alanine + ATP = D-alanyl-D-alanine + ADP + phosphate + H(+). The protein operates within cell wall biogenesis; peptidoglycan biosynthesis. In terms of biological role, cell wall formation. In Ligilactobacillus salivarius (strain UCC118) (Lactobacillus salivarius), this protein is D-alanine--D-alanine ligase.